Consider the following 562-residue polypeptide: tRNA (guanine(37)-N(1))-methyltransferase (562 aa).

The N-terminal 41 residues, 1-41, are a transit peptide targeting the mitochondrion; sequence MLFRRFLNLTTKTPHLQTFRARHYFRNMSCPELIPPPTVRG. S-adenosyl-L-methionine-binding positions include His-243, 281–282, and Asn-340; that span reads DL. Positions 523–534 are enriched in basic and acidic residues; it reads AHIVAKKPEKKP. Residues 523–562 form a disordered region; sequence AHIVAKKPEKKPLPAKPASKKNKNQANTKQVEAGLDKMQM.

The protein belongs to the class I-like SAM-binding methyltransferase superfamily. TRM5/TYW2 family. In terms of assembly, monomer.

The protein resides in the mitochondrion matrix. Its subcellular location is the nucleus. It localises to the cytoplasm. The catalysed reaction is guanosine(37) in tRNA + S-adenosyl-L-methionine = N(1)-methylguanosine(37) in tRNA + S-adenosyl-L-homocysteine + H(+). In terms of biological role, specifically methylates the N1 position of guanosine-37 in various cytoplasmic and mitochondrial tRNAs. Methylation is not dependent on the nature of the nucleoside 5' of the target nucleoside. This is the first step in the biosynthesis of wybutosine (yW), a modified base adjacent to the anticodon of tRNAs and required for accurate decoding. This Aedes aegypti (Yellowfever mosquito) protein is tRNA (guanine(37)-N(1))-methyltransferase.